Consider the following 432-residue polypeptide: DnaJ-like protein 1 (432 aa).

Residues 4–73 enclose the J domain; it reads DTEYYDLLGV…RAKYDKYGRK (70 aa). Residues 117 to 187 are disordered; sequence NAEDEAEKEK…KKNEQVGAEA (71 aa).

It belongs to the DnaJ family. In terms of assembly, interacts with SLN1.

The protein resides in the cytoplasm. Functionally, required for peroxisomal protein import which maintains the function of peroxisomes. The polypeptide is DnaJ-like protein 1 (DJP1) (Saccharomyces cerevisiae (strain ATCC 204508 / S288c) (Baker's yeast)).